Reading from the N-terminus, the 183-residue chain is Thymidine kinase (183 aa).

11-18 contributes to the ATP binding site; that stretch reads GPMFSGKT. The active-site Proton acceptor is glutamate 89. Phenylalanine 119 lines the substrate pocket. Zn(2+)-binding residues include cysteine 144 and cysteine 147. 163–167 lines the substrate pocket; sequence VMDIG. Residues cysteine 176 and cysteine 179 each contribute to the Zn(2+) site.

It belongs to the thymidine kinase family.

The enzyme catalyses thymidine + ATP = dTMP + ADP + H(+). In Vertebrata (FPV), this protein is Thymidine kinase (TK).